The primary structure comprises 397 residues: MTSASQAAPVALPVMPDAEDARIMAKAALFAPPPSVMEDGRKDLVGLSREQLTEALAEIGFPAFRAKQLWHWIYHRGETDFRVMSSIAKPQQETLAERFVISRPAVTECLTSVDETRKWLFRFRDGQEAETVYIPDPVEDRGAVCISSQVGCTLSCRFCHTGTQPLVRNLGPAEIVGQFMAARDAYGEWPSPKGETPRLLSTIVLMGMGEPLYNYENVKQAMRIVMDGDGIALSRRRITLSTSGVVPMMDRCGTELAVNLAISLHAVTDELRDELVPLNRKYPIRELIAACRRYPAASNARRITFEYIMLDGINDSEAEARELVRLIAGIPAKVNLIPFNPWPGSQYTPSRPKALERFSRIVMEAGFASPIRTPRGRDILAACGQLRTESRKERRID.

E130 (proton acceptor) is an active-site residue. The Radical SAM core domain occupies 138 to 377; the sequence is VEDRGAVCIS…ASPIRTPRGR (240 aa). C145 and C383 are oxidised to a cystine. Positions 152, 156, and 159 each coordinate [4Fe-4S] cluster. S-adenosyl-L-methionine is bound by residues 209 to 210, S241, 263 to 265, and N340; these read GE and SLH. The active-site S-methylcysteine intermediate is C383.

The protein belongs to the radical SAM superfamily. RlmN family. [4Fe-4S] cluster is required as a cofactor.

The protein localises to the cytoplasm. The enzyme catalyses adenosine(2503) in 23S rRNA + 2 reduced [2Fe-2S]-[ferredoxin] + 2 S-adenosyl-L-methionine = 2-methyladenosine(2503) in 23S rRNA + 5'-deoxyadenosine + L-methionine + 2 oxidized [2Fe-2S]-[ferredoxin] + S-adenosyl-L-homocysteine. It carries out the reaction adenosine(37) in tRNA + 2 reduced [2Fe-2S]-[ferredoxin] + 2 S-adenosyl-L-methionine = 2-methyladenosine(37) in tRNA + 5'-deoxyadenosine + L-methionine + 2 oxidized [2Fe-2S]-[ferredoxin] + S-adenosyl-L-homocysteine. Functionally, specifically methylates position 2 of adenine 2503 in 23S rRNA and position 2 of adenine 37 in tRNAs. m2A2503 modification seems to play a crucial role in the proofreading step occurring at the peptidyl transferase center and thus would serve to optimize ribosomal fidelity. The polypeptide is Dual-specificity RNA methyltransferase RlmN (Granulibacter bethesdensis (strain ATCC BAA-1260 / CGDNIH1)).